Consider the following 240-residue polypeptide: NADH-quinone oxidoreductase subunit I 2 (240 aa).

4Fe-4S ferredoxin-type domains lie at 57-86 (TDLR…IEWH) and 97-126 (DRFA…MGYD). [4Fe-4S] cluster is bound by residues C66, C69, C72, C76, C106, C109, C112, and C116. The disordered stretch occupies residues 185-240 (IHGYLGRPPLPKGYEPELKPQFRKPAEEAAEAQQAEAAGQPAAEPGKTNGEEAGQP). The segment covering 198–211 (YEPELKPQFRKPAE) has biased composition (basic and acidic residues). Low complexity predominate over residues 215–230 (EAQQAEAAGQPAAEPG).

Belongs to the complex I 23 kDa subunit family. As to quaternary structure, NDH-1 is composed of 14 different subunits. Subunits NuoA, H, J, K, L, M, N constitute the membrane sector of the complex. The cofactor is [4Fe-4S] cluster.

The protein localises to the cell membrane. The enzyme catalyses a quinone + NADH + 5 H(+)(in) = a quinol + NAD(+) + 4 H(+)(out). Its function is as follows. NDH-1 shuttles electrons from NADH, via FMN and iron-sulfur (Fe-S) centers, to quinones in the respiratory chain. The immediate electron acceptor for the enzyme in this species is believed to be ubiquinone. Couples the redox reaction to proton translocation (for every two electrons transferred, four hydrogen ions are translocated across the cytoplasmic membrane), and thus conserves the redox energy in a proton gradient. This chain is NADH-quinone oxidoreductase subunit I 2, found in Symbiobacterium thermophilum (strain DSM 24528 / JCM 14929 / IAM 14863 / T).